The sequence spans 439 residues: Innexin-19 (439 aa).

The next 4 membrane-spanning stretches (helical) occupy residues Pro-33–Ile-53, Gln-103–Trp-123, Ile-199–Leu-219, and Val-285–Ile-305.

The protein belongs to the pannexin family.

It is found in the cell membrane. The protein resides in the cell junction. It localises to the gap junction. Functionally, structural component of the gap junctions that specifically coordinates left-right asymmetry in the developing nervous system. Acts by forming gap junction network linking embryonic neurons and providing electrical coupling between cells, leading to promote or inhibit AWC signaling. In Caenorhabditis briggsae, this protein is Innexin-19 (inx-19).